Here is a 147-residue protein sequence, read N- to C-terminus: Large ribosomal subunit protein uL15 (147 aa).

The disordered stretch occupies residues 1–45; the sequence is MRLEDLRPTPGAMKKRKRVGRGPGSGHGKTSGRGHKGQKARGSGK. Over residues 30–44 the composition is skewed to basic residues; it reads TSGRGHKGQKARGSG.

The protein belongs to the universal ribosomal protein uL15 family. In terms of assembly, part of the 50S ribosomal subunit.

Binds to the 23S rRNA. The sequence is that of Large ribosomal subunit protein uL15 from Thermotoga sp. (strain RQ2).